A 255-amino-acid chain; its full sequence is Alpha-acetolactate decarboxylase (255 aa).

The protein belongs to the alpha-acetolactate decarboxylase family.

It carries out the reaction (2S)-2-acetolactate + H(+) = (R)-acetoin + CO2. Its pathway is polyol metabolism; (R,R)-butane-2,3-diol biosynthesis; (R,R)-butane-2,3-diol from pyruvate: step 2/3. Converts acetolactate into acetoin, which can be excreted by the cells. This may be a mechanism for controlling the internal pH of cells in the stationary stage. The sequence is that of Alpha-acetolactate decarboxylase (alsD) from Bacillus subtilis (strain 168).